Consider the following 346-residue polypeptide: FAS-associated factor 2 (346 aa).

K68 carries the N6-acetyllysine modification. Residues 176–251 adopt a coiled-coil conformation; sequence SERLEREERN…EEKERKLECL (76 aa). Residues 200 to 262 form a disordered region; sequence ASLRADQEKE…PEPSPDDPDS (63 aa). A compositionally biased stretch (basic and acidic residues) spans 204 to 249; the sequence is ADQEKERKKREERERKRRKEEEVQQQKLAEERRRQNLQEEKERKLE. Residues 258 to 340 enclose the UBX domain; that stretch reads DDPDSVKIIF…GLSHTEVLFV (83 aa).

In terms of assembly, identified in a complex that contains SEL1L, OS9, FAF2/UBXD8, UBE2J1/UBC6E and AUP1. Interacts with YOD1. Interacts (via N-terminus) with UBQLN2 (via C-terminus). Interacts with PNPLA2 and UBAC2. Interacts with ZFAND2B; probably through VCP. Interacts with LMBR1L.

It localises to the cytoplasm. It is found in the lipid droplet. The protein localises to the endoplasmic reticulum. Its function is as follows. Plays an important role in endoplasmic reticulum-associated degradation (ERAD) that mediates ubiquitin-dependent degradation of misfolded endoplasmic reticulum proteins. By controlling the steady-state expression of the IGF1R receptor, indirectly regulates the insulin-like growth factor receptor signaling pathway. Involved in inhibition of lipid droplet degradation by binding to phospholipase PNPL2 and inhibiting its activity by promoting dissociation of PNPL2 from its endogenous activator, ABHD5 which inhibits the rate of triacylglycerol hydrolysis. Involved in stress granule disassembly: associates with ubiquitinated G3BP1 in response to heat shock, thereby promoting interaction between ubiquitinated G3BP1 and VCP, followed by G3BP1 extraction from stress granules and stress granule disassembly. The sequence is that of FAS-associated factor 2 (Faf2) from Rattus norvegicus (Rat).